We begin with the raw amino-acid sequence, 290 residues long: Arylamine N-acetyltransferase 2 (290 aa).

The active-site Acyl-thioester intermediate is C68. Positions 103 and 104 each coordinate CoA. 106–107 (IH) contacts substrate. Active-site residues include H107 and D122. Y208 is a CoA binding site.

The protein belongs to the arylamine N-acetyltransferase family.

The protein resides in the cytoplasm. The catalysed reaction is an arylamine + acetyl-CoA = an N-acetylarylamine + CoA. The enzyme catalyses an N-hydroxyarylamine + acetyl-CoA = an N-acetoxyarylamine + CoA. Catalyzes the N- or O-acetylation of various arylamine and heterocyclic amine substrates, and participates in the detoxification of a plethora of hydrazine and arylamine drugs. The polypeptide is Arylamine N-acetyltransferase 2 (Nat2) (Mus musculus (Mouse)).